The primary structure comprises 191 residues: MFSPLLFFAVSISCVLANSNEIKDGGSDRGAHSDRAGLWFGPRLGKRSLRISTEDNRQAFFKLLEAADALKYYYDRLPYEMQADEPETRVTKKVIFTPKLGRSLAYDDKVFENVEFTPRLGRRLADDMPATPADQELYRPDPDQIDSRTKYFSPRLGRTMNFSPRLGRELSYDMLPSKLRLVRSTNRTQST.

A signal peptide spans 1-17 (MFSPLLFFAVSISCVLA). At L44 the chain carries Leucine amide. A propeptide spanning residues 48–91 (SLRISTEDNRQAFFKLLEAADALKYYYDRLPYEMQADEPETRVT) is cleaved from the precursor. Leucine amide occurs at positions 100, 120, 156, and 166. The propeptide occupies 169 to 191 (ELSYDMLPSKLRLVRSTNRTQST).

It belongs to the pyrokinin family. In terms of tissue distribution, expressed in the subesophageal ganglion.

It localises to the secreted. Its function is as follows. A hormone that controls sex pheromone production in females and pheromone responsiveness in male. The polypeptide is PBAN-type neuropeptides (Spodoptera littoralis (Egyptian cotton leafworm)).